The chain runs to 950 residues: 5'-3' exoribonuclease 2 (950 aa).

The CCHC-type zinc-finger motif lies at proline 262–glycine 278. Position 286 is an N6-acetyllysine (lysine 286). A disordered region spans residues lysine 408–asparagine 508. The segment covering arginine 416–lysine 426 has biased composition (basic residues). At threonine 439 the chain carries Phosphothreonine. Residues serine 445 to arginine 458 are compositionally biased toward polar residues. Residues serine 448, serine 471, serine 473, serine 475, serine 482, serine 487, serine 499, serine 501, and serine 678 each carry the phosphoserine modification. Residues asparagine 468–serine 482 show a composition bias toward low complexity. Residues arginine 824, arginine 847, and arginine 851 each carry the asymmetric dimethylarginine; alternate modification. Residues arginine 824, arginine 847, and arginine 851 each carry the omega-N-methylarginine; alternate modification. The residue at position 880 (arginine 880) is an Asymmetric dimethylarginine. Arginine 883 is modified (asymmetric dimethylarginine; alternate). Arginine 883 bears the Omega-N-methylarginine; alternate mark. Arginine 895 bears the Omega-N-methylarginine mark. The disordered stretch occupies residues methionine 911–asparagine 950. Residues proline 920 to lysine 937 show a composition bias toward basic and acidic residues. Position 946 is an asymmetric dimethylarginine; alternate (arginine 946). Arginine 946 bears the Omega-N-methylarginine; alternate mark.

This sequence belongs to the 5'-3' exonuclease family. XRN2/RAT1 subfamily. Interacts with POLR2A and SMN1/SMN2. Interacts with CDKN2AIP and NKRF. Interacts with CDKN2AIPNL; the interaction is direct. Interacts with TRIM71 (via NHL repeats) in an RNA-dependent manner. Interacts with DHX34; the interaction is RNA-independent. Expressed in the spleen, thymus, prostate, testis, ovary, small intestine, colon, peripheral blood leukocytes, heart, brain, placenta, lung, liver, skeletal muscle, kidney, and pancreas. Isoform 2 is expressed predominantly in peripheral blood leukocytes.

It localises to the nucleus. The protein resides in the nucleolus. Possesses 5'-&gt;3' exoribonuclease activity. May promote the termination of transcription by RNA polymerase II. During transcription termination, cleavage at the polyadenylation site liberates a 5' fragment which is subsequently processed to form the mature mRNA and a 3' fragment which remains attached to the elongating polymerase. The processive degradation of this 3' fragment by this protein may promote termination of transcription. Binds to RNA polymerase II (RNAp II) transcription termination R-loops formed by G-rich pause sites. The chain is 5'-3' exoribonuclease 2 (XRN2) from Homo sapiens (Human).